Here is a 481-residue protein sequence, read N- to C-terminus: Inosine-5'-monophosphate dehydrogenase (481 aa).

2 CBS domains span residues 92-148 and 152-209; these read VIND…SKKV and MTKM…PEAN. Residues aspartate 244 and 293–295 each bind NAD(+); that span reads GIG. K(+) contacts are provided by glycine 295 and glycine 297. Residue serine 298 participates in IMP binding. Cysteine 300 provides a ligand contact to K(+). The Thioimidate intermediate role is filled by cysteine 300. Residues 333 to 335, 356 to 357, and 380 to 384 each bind IMP; these read DGG, GS, and YRGMG. The Proton acceptor role is filled by arginine 396. Glutamate 410 is a binding site for IMP. The K(+) site is built by glutamate 464, serine 465, and histidine 466.

It belongs to the IMPDH/GMPR family. Homotetramer. K(+) is required as a cofactor.

The catalysed reaction is IMP + NAD(+) + H2O = XMP + NADH + H(+). It participates in purine metabolism; XMP biosynthesis via de novo pathway; XMP from IMP: step 1/1. Mycophenolic acid (MPA) is a non-competitive inhibitor that prevents formation of the closed enzyme conformation by binding to the same site as the amobile flap. In contrast, mizoribine monophosphate (MZP) is a competitive inhibitor that induces the closed conformation. MPA is a potent inhibitor of mammalian IMPDHs but a poor inhibitor of the bacterial enzymes. MZP is a more potent inhibitor of bacterial IMPDH. Its function is as follows. Catalyzes the conversion of inosine 5'-phosphate (IMP) to xanthosine 5'-phosphate (XMP), the first committed and rate-limiting step in the de novo synthesis of guanine nucleotides, and therefore plays an important role in the regulation of cell growth. The chain is Inosine-5'-monophosphate dehydrogenase from Helicobacter pylori (strain ATCC 700392 / 26695) (Campylobacter pylori).